A 96-amino-acid chain; its full sequence is Putative pterin-4-alpha-carbinolamine dehydratase (96 aa).

Belongs to the pterin-4-alpha-carbinolamine dehydratase family.

It carries out the reaction (4aS,6R)-4a-hydroxy-L-erythro-5,6,7,8-tetrahydrobiopterin = (6R)-L-erythro-6,7-dihydrobiopterin + H2O. This Synechocystis sp. (strain ATCC 27184 / PCC 6803 / Kazusa) protein is Putative pterin-4-alpha-carbinolamine dehydratase.